The sequence spans 372 residues: Alanine racemase (372 aa).

The active-site Proton acceptor; specific for D-alanine is the Lys36. Lys36 carries the N6-(pyridoxal phosphate)lysine modification. Arg134 is a substrate binding site. Residue Tyr266 is the Proton acceptor; specific for L-alanine of the active site. Residue Met314 participates in substrate binding.

The protein belongs to the alanine racemase family. Requires pyridoxal 5'-phosphate as cofactor.

The enzyme catalyses L-alanine = D-alanine. It functions in the pathway amino-acid biosynthesis; D-alanine biosynthesis; D-alanine from L-alanine: step 1/1. Its function is as follows. Catalyzes the interconversion of L-alanine and D-alanine. May also act on other amino acids. This chain is Alanine racemase (alr), found in Nitratidesulfovibrio vulgaris (strain DSM 19637 / Miyazaki F) (Desulfovibrio vulgaris).